We begin with the raw amino-acid sequence, 376 residues long: Chaperone protein DnaJ (376 aa).

One can recognise a J domain in the interval 5–70 (DYYEVLGVGR…DKKAAYDQFG (66 aa)). Residues 132–210 (GLTKELKVPT…CHGNGRVEKT (79 aa)) form a CR-type zinc finger. Zn(2+) contacts are provided by Cys145, Cys148, Cys162, Cys165, Cys184, Cys187, Cys198, and Cys201. CXXCXGXG motif repeat units follow at residues 145-152 (CDSCDGSG), 162-169 (CGTCHGMG), 184-191 (CPTCHGRG), and 198-205 (CSKCHGNG).

Belongs to the DnaJ family. As to quaternary structure, homodimer. Requires Zn(2+) as cofactor.

The protein resides in the cytoplasm. Participates actively in the response to hyperosmotic and heat shock by preventing the aggregation of stress-denatured proteins and by disaggregating proteins, also in an autonomous, DnaK-independent fashion. Unfolded proteins bind initially to DnaJ; upon interaction with the DnaJ-bound protein, DnaK hydrolyzes its bound ATP, resulting in the formation of a stable complex. GrpE releases ADP from DnaK; ATP binding to DnaK triggers the release of the substrate protein, thus completing the reaction cycle. Several rounds of ATP-dependent interactions between DnaJ, DnaK and GrpE are required for fully efficient folding. Also involved, together with DnaK and GrpE, in the DNA replication of plasmids through activation of initiation proteins. This is Chaperone protein DnaJ from Shewanella amazonensis (strain ATCC BAA-1098 / SB2B).